The primary structure comprises 122 residues: Large ribosomal subunit protein uL14 (122 aa).

It belongs to the universal ribosomal protein uL14 family. As to quaternary structure, part of the 50S ribosomal subunit. Forms a cluster with proteins L3 and L19. In the 70S ribosome, L14 and L19 interact and together make contacts with the 16S rRNA in bridges B5 and B8.

Its function is as follows. Binds to 23S rRNA. Forms part of two intersubunit bridges in the 70S ribosome. This is Large ribosomal subunit protein uL14 from Acinetobacter baumannii (strain AB307-0294).